We begin with the raw amino-acid sequence, 361 residues long: Mitogen-activated protein kinase 14A (361 aa).

Residues Y25–F309 form the Protein kinase domain. Residues V31–V39 and K54 contribute to the ATP site. D151 functions as the Proton acceptor in the catalytic mechanism. The residue at position 181 (T181) is a Phosphothreonine; by MAP2K6. The TXY motif lies at T181–Y183. Y183 is modified (phosphotyrosine; by MAP2K6).

This sequence belongs to the protein kinase superfamily. CMGC Ser/Thr protein kinase family. MAP kinase subfamily. Requires Mg(2+) as cofactor. Dually phosphorylated on Thr-181 and Tyr-183, which activates the enzyme. As to expression, exclusively expressed in the ovary.

It localises to the cytoplasm. The protein resides in the nucleus. It carries out the reaction L-seryl-[protein] + ATP = O-phospho-L-seryl-[protein] + ADP + H(+). The enzyme catalyses L-threonyl-[protein] + ATP = O-phospho-L-threonyl-[protein] + ADP + H(+). Activated by threonine and tyrosine phosphorylation by the dual specificity kinase, MKK6. In terms of biological role, serine/threonine kinase which acts as an essential component of the MAP kinase signal transduction pathway. Mapk14a is one of the four p38 MAPKs which play an important role in the cascades of cellular responses evoked by extracellular stimuli such as pro-inflammatory cytokines or physical stress leading to direct activation of transcription factors. Accordingly, p38 MAPKs phosphorylate a broad range of proteins and it has been estimated that they may have approximately 200 to 300 substrates each. Some of the targets are downstream kinases which are activated through phosphorylation and further phosphorylate additional targets. The chain is Mitogen-activated protein kinase 14A (mapk14a) from Cyprinus carpio (Common carp).